A 213-amino-acid polypeptide reads, in one-letter code: Lactobacillus shifted protein (213 aa).

Residues 28 to 38 (PRFTENAMQPN) show a composition bias toward polar residues. Disordered stretches follow at residues 28 to 56 (PRFTENAMQPNDPTPRPAKPNVSETDATP) and 182 to 213 (PTSSYPLEPTGAAEEVNENQRVTEGATGYEQR).

This Emericella nidulans (strain FGSC A4 / ATCC 38163 / CBS 112.46 / NRRL 194 / M139) (Aspergillus nidulans) protein is Lactobacillus shifted protein (lbsA).